The primary structure comprises 171 residues: Adenine phosphoribosyltransferase (171 aa).

Belongs to the purine/pyrimidine phosphoribosyltransferase family. Homodimer.

Its subcellular location is the cytoplasm. The catalysed reaction is AMP + diphosphate = 5-phospho-alpha-D-ribose 1-diphosphate + adenine. It participates in purine metabolism; AMP biosynthesis via salvage pathway; AMP from adenine: step 1/1. Functionally, catalyzes a salvage reaction resulting in the formation of AMP, that is energically less costly than de novo synthesis. This chain is Adenine phosphoribosyltransferase, found in Acidiphilium cryptum (strain JF-5).